Consider the following 205-residue polypeptide: Holliday junction branch migration complex subunit RuvA (205 aa).

The segment at 1 to 64 (MIGRLRGIVL…EDAQLLYGFN (64 aa)) is domain I. Residues 65–143 (DKQERALFRE…GLNGDLFNQS (79 aa)) are domain II. A flexible linker region spans residues 144-156 (SDINLPATAKQTT). The segment at 157 to 205 (SDADSEAEAAAALVSLGYKPQEASRMVSKIAKPGADCETLIREALRAVL) is domain III.

The protein belongs to the RuvA family. In terms of assembly, homotetramer. Forms an RuvA(8)-RuvB(12)-Holliday junction (HJ) complex. HJ DNA is sandwiched between 2 RuvA tetramers; dsDNA enters through RuvA and exits via RuvB. An RuvB hexamer assembles on each DNA strand where it exits the tetramer. Each RuvB hexamer is contacted by two RuvA subunits (via domain III) on 2 adjacent RuvB subunits; this complex drives branch migration. In the full resolvosome a probable DNA-RuvA(4)-RuvB(12)-RuvC(2) complex forms which resolves the HJ.

Its subcellular location is the cytoplasm. Its function is as follows. The RuvA-RuvB-RuvC complex processes Holliday junction (HJ) DNA during genetic recombination and DNA repair, while the RuvA-RuvB complex plays an important role in the rescue of blocked DNA replication forks via replication fork reversal (RFR). RuvA specifically binds to HJ cruciform DNA, conferring on it an open structure. The RuvB hexamer acts as an ATP-dependent pump, pulling dsDNA into and through the RuvAB complex. HJ branch migration allows RuvC to scan DNA until it finds its consensus sequence, where it cleaves and resolves the cruciform DNA. The polypeptide is Holliday junction branch migration complex subunit RuvA (Photorhabdus laumondii subsp. laumondii (strain DSM 15139 / CIP 105565 / TT01) (Photorhabdus luminescens subsp. laumondii)).